The sequence spans 510 residues: ATP synthase subunit alpha (510 aa).

An ATP-binding site is contributed by 169–176 (GDRQTGKT).

The protein belongs to the ATPase alpha/beta chains family. As to quaternary structure, F-type ATPases have 2 components, CF(1) - the catalytic core - and CF(0) - the membrane proton channel. CF(1) has five subunits: alpha(3), beta(3), gamma(1), delta(1), epsilon(1). CF(0) has three main subunits: a(1), b(2) and c(9-12). The alpha and beta chains form an alternating ring which encloses part of the gamma chain. CF(1) is attached to CF(0) by a central stalk formed by the gamma and epsilon chains, while a peripheral stalk is formed by the delta and b chains.

It localises to the cell inner membrane. The catalysed reaction is ATP + H2O + 4 H(+)(in) = ADP + phosphate + 5 H(+)(out). Its function is as follows. Produces ATP from ADP in the presence of a proton gradient across the membrane. The alpha chain is a regulatory subunit. This is ATP synthase subunit alpha from Nitrobacter winogradskyi (strain ATCC 25391 / DSM 10237 / CIP 104748 / NCIMB 11846 / Nb-255).